Consider the following 674-residue polypeptide: Carcinine transporter (674 aa).

At 1-53 (MSDIEDNDGDEYDELSELRQRHKPESQPSVDEAFDLDDLLPTIGEFGKYQKLL) the chain is on the cytoplasmic side. Residues 54–74 (VFGICLPACIPCGFCAFNQLF) traverse the membrane as a helical segment. The Extracellular segment spans residues 75-178 (MADTPDDYWC…DLVCDQDIYP (104 aa)). Residues Asn-122, Asn-141, and Asn-156 are each glycosylated (N-linked (GlcNAc...) asparagine). The helical transmembrane segment at 179–199 (TIGLAALNTGGPVGVYLFGLL) threads the bilayer. The Cytoplasmic portion of the chain corresponds to 200–206 (NDRGGRR). Residues 207–227 (LSYFVCLATLLAGSLMTSLSK) form a helical membrane-spanning segment. Over 228 to 236 (DFWTWAGSR) the chain is Extracellular. Residues 237-257 (VIVGLTIPAVYQIPFIISLEL) traverse the membrane as a helical segment. Over 258-264 (VGENYRS) the chain is Cytoplasmic. A helical transmembrane segment spans residues 265–285 (FVTVMTCTFYTSGIMLLSGVT). Residues 286–293 (YLERDWVR) are Extracellular-facing. The chain crosses the membrane as a helical span at residues 294-314 (LSYITSLPFYAYFLYMFVMPE). The Cytoplasmic portion of the chain corresponds to 315–385 (SPRWLLMRGR…CRTPNMRLKT (71 aa)). Residues 386 to 406 (ILITLSWFANETVYLGLSYYG) form a helical membrane-spanning segment. Residues 407 to 414 (PALGTNQY) are Extracellular-facing. Residues 415 to 435 (VSFFLSAVVELPSYLCCWYFM) traverse the membrane as a helical segment. The Cytoplasmic segment spans residues 436 to 441 (DTWGRR). A helical membrane pass occupies residues 442–462 (WPLSLSMILGGVACVITVMLP). The Extracellular portion of the chain corresponds to 463-469 (DDAVDET). A helical transmembrane segment spans residues 470–490 (LVLYLVSKALLSASFLIIYPF). The Cytoplasmic segment spans residues 491–500 (AGELYPTQVR). Residues 501 to 521 (GIGIGASSYIGGLGLIGIPFI) form a helical membrane-spanning segment. Residues 522–527 (TYLGKD) lie on the Extracellular side of the membrane. A helical transmembrane segment spans residues 528–548 (NLKLPLVIMGFLSMLGGMTGL). Residues 549-674 (RLPETLHHRL…DGTMQLTHWI (126 aa)) lie on the Cytoplasmic side of the membrane. A compositionally biased stretch (basic and acidic residues) spans 614–631 (RDSRRVREPAPRIDERTP). Positions 614–647 (RDSRRVREPAPRIDERTPLDTTASGSGRPVHRPS) are disordered.

This sequence belongs to the major facilitator (TC 2.A.1) superfamily. Organic cation transporter (TC 2.A.1.19) family. In terms of tissue distribution, expressed in photoreceptor cells.

It localises to the cell membrane. It is found in the cell projection. The protein resides in the axon. In terms of biological role, carcinine transporter which is required for recycling of the neurotransmitter histamine in photoreceptor neurons of the compound eye. Following histamine release from photoreceptors and its uptake by glia where it is converted to carcinine, required for the uptake of carcinine from glia into photoreceptor cells where it can be hydrolyzed by tan to form histamine and beta-alanine. The chain is Carcinine transporter from Drosophila melanogaster (Fruit fly).